We begin with the raw amino-acid sequence, 427 residues long: Transcription termination factor Rho (427 aa).

Residues 55–130 form the Rho RNA-BD domain; it reads YFFGEGVLEI…IKIEAINYRP (76 aa). Residues 173-178, 185-190, and arginine 216 contribute to the ATP site; these read GKGQRG and KAGKTT.

It belongs to the Rho family. In terms of assembly, homohexamer. The homohexamer assembles into an open ring structure.

Functionally, facilitates transcription termination by a mechanism that involves Rho binding to the nascent RNA, activation of Rho's RNA-dependent ATPase activity, and release of the mRNA from the DNA template. In Thermotoga maritima (strain ATCC 43589 / DSM 3109 / JCM 10099 / NBRC 100826 / MSB8), this protein is Transcription termination factor Rho.